The sequence spans 129 residues: Protein HMF1 (129 aa).

A Glycyl lysine isopeptide (Lys-Gly) (interchain with G-Cter in ubiquitin) cross-link involves residue K52.

It belongs to the RutC family.

Its subcellular location is the cytoplasm. The protein resides in the nucleus. It is found in the mitochondrion intermembrane space. The sequence is that of Protein HMF1 (HMF1) from Saccharomyces cerevisiae (strain ATCC 204508 / S288c) (Baker's yeast).